A 460-amino-acid polypeptide reads, in one-letter code: Monocarboxylate transporter 12 (460 aa).

Residues 1 to 10 (MTQEKRSLHK) are Cytoplasmic-facing. 12 helical membrane passes run 11–31 (TPPD…VTVC), 58–78 (AWIH…GSYV), 86–106 (VGII…SFAT), 115–135 (LGVL…AMVG), 148–168 (IAMS…QLLI), 177–197 (LLIL…MRPI), 246–266 (FIIL…PFVY), 282–302 (AFLM…FGWV), 329–349 (FLPI…FGYF), 354–374 (VALI…SSAL), 376–396 (VVFF…GWLV), and 406–426 (FLLS…AKII). The Cytoplasmic portion of the chain corresponds to 427–460 (NRIKKNPQATVVRSSDIKQEVWTNGDVSCLNAIS).

This sequence belongs to the major facilitator superfamily. Monocarboxylate porter (TC 2.A.1.13) family.

It localises to the cell membrane. The protein resides in the basolateral cell membrane. It catalyses the reaction creatine(in) = creatine(out). The enzyme catalyses guanidinoacetate(in) = guanidinoacetate(out). Its function is as follows. Functions as a transporter for creatine and as well for its precursor guanidinoacetate. Transport of creatine and GAA is independent of resting membrane potential and extracellular Na(+), Cl(-), or pH. Contributes to the process of creatine biosynthesis and distribution. The protein is Monocarboxylate transporter 12 (slc16a12) of Xenopus laevis (African clawed frog).